The primary structure comprises 404 residues: XK-related protein 8 (404 aa).

The next 8 helical transmembrane spans lie at 14–34 (FVFS…DVWV), 44–64 (FFWF…VQMF), 167–187 (AVQF…VVDY), 206–226 (SLIY…ALAL), 227–247 (FASV…LVFV), 263–283 (GEWL…FNVA), 292–312 (AIYH…WWCC), and 319–339 (EPYA…GLLF).

The protein belongs to the XK family.

It is found in the cell membrane. It carries out the reaction a 1,2-diacyl-sn-glycero-3-phospho-L-serine(in) = a 1,2-diacyl-sn-glycero-3-phospho-L-serine(out). Its function is as follows. Phospholipid scramblase that promotes phosphatidylserine exposure on apoptotic cell surface, possibly by mediating phospholipid scrambling. Phosphatidylserine is a specific marker only present at the surface of apoptotic cells and acts as a specific signal for engulfment. In Tetraodon nigroviridis (Spotted green pufferfish), this protein is XK-related protein 8.